The primary structure comprises 426 residues: Histidine--tRNA ligase (426 aa).

Belongs to the class-II aminoacyl-tRNA synthetase family. As to quaternary structure, homodimer.

Its subcellular location is the cytoplasm. It carries out the reaction tRNA(His) + L-histidine + ATP = L-histidyl-tRNA(His) + AMP + diphosphate + H(+). This chain is Histidine--tRNA ligase, found in Streptococcus agalactiae serotype III (strain NEM316).